Here is a 425-residue protein sequence, read N- to C-terminus: UPF0229 protein YE2273 (425 aa).

The disordered stretch occupies residues 84 to 110 (TNDRIERPQGGGGGSGSGQGNAGQDGE). Residues 92-108 (QGGGGGSGSGQGNAGQD) show a composition bias toward gly residues.

Belongs to the UPF0229 family.

This is UPF0229 protein YE2273 from Yersinia enterocolitica serotype O:8 / biotype 1B (strain NCTC 13174 / 8081).